A 479-amino-acid polypeptide reads, in one-letter code: Lysosomal protective protein (479 aa).

The N-terminal stretch at 1–27 (MFRAALWPPVLLLLQLLLLACAPGGEG) is a signal peptide. 4 disulfides stabilise this stretch: Cys87–Cys361, Cys239–Cys255, Cys240–Cys245, and Cys280–Cys330. N-linked (GlcNAc...) asparagine glycosylation occurs at Asn144. Ser177 is a catalytic residue. An N-linked (GlcNAc...) asparagine glycan is attached at Asn332. Active-site residues include Asp399 and His456.

This sequence belongs to the peptidase S10 family. Heterodimer of a 32 kDa chain and a 20 kDa chain; disulfide-linked.

It localises to the lysosome. It carries out the reaction Release of a C-terminal amino acid with broad specificity.. Its function is as follows. Protective protein appears to be essential for both the activity of beta-galactosidase and neuraminidase, it associates with these enzymes and exerts a protective function necessary for their stability and activity. This protein is also a carboxypeptidase and can deamidate tachykinins. The protein is Lysosomal protective protein (CTSA) of Bos taurus (Bovine).